Consider the following 143-residue polypeptide: Alpha-S2-casein-like B (143 aa).

The signal sequence occupies residues 1-15; sequence MKFIILTCLLAVALA.

The protein belongs to the alpha-casein family. Mammary gland specific. Secreted in milk.

Its subcellular location is the secreted. Its function is as follows. Important role in the capacity of milk to transport calcium phosphate. This is Alpha-S2-casein-like B (Csn1s2b) from Mus musculus (Mouse).